We begin with the raw amino-acid sequence, 374 residues long: Anhydro-N-acetylmuramic acid kinase (374 aa).

12–19 (GTSLDGID) is an ATP binding site.

Belongs to the anhydro-N-acetylmuramic acid kinase family.

It carries out the reaction 1,6-anhydro-N-acetyl-beta-muramate + ATP + H2O = N-acetyl-D-muramate 6-phosphate + ADP + H(+). It functions in the pathway amino-sugar metabolism; 1,6-anhydro-N-acetylmuramate degradation. Its pathway is cell wall biogenesis; peptidoglycan recycling. Functionally, catalyzes the specific phosphorylation of 1,6-anhydro-N-acetylmuramic acid (anhMurNAc) with the simultaneous cleavage of the 1,6-anhydro ring, generating MurNAc-6-P. Is required for the utilization of anhMurNAc either imported from the medium or derived from its own cell wall murein, and thus plays a role in cell wall recycling. The polypeptide is Anhydro-N-acetylmuramic acid kinase (Klebsiella pneumoniae subsp. pneumoniae (strain ATCC 700721 / MGH 78578)).